The following is a 72-amino-acid chain: DNA-directed RNA polymerase subunit omega (72 aa).

The protein belongs to the RNA polymerase subunit omega family. The RNAP catalytic core consists of 2 alpha, 1 beta, 1 beta' and 1 omega subunit. When a sigma factor is associated with the core the holoenzyme is formed, which can initiate transcription.

It carries out the reaction RNA(n) + a ribonucleoside 5'-triphosphate = RNA(n+1) + diphosphate. Promotes RNA polymerase assembly. Latches the N- and C-terminal regions of the beta' subunit thereby facilitating its interaction with the beta and alpha subunits. In Clostridium botulinum (strain Langeland / NCTC 10281 / Type F), this protein is DNA-directed RNA polymerase subunit omega.